The following is a 409-amino-acid chain: Outer membrane protein YopM (409 aa).

LRR repeat units lie at residues 72 to 91, 92 to 113, 114 to 131, 132 to 153, 154 to 173, 174 to 195, 196 to 215, 216 to 237, 238 to 257, 258 to 279, 280 to 297, 298 to 317, 318 to 339, 340 to 357, and 358 to 379; these read QAHELELNNLGLSSLPELPP, HLESLVASCNSLTELPELPQSL, KSLLVDNNNLKALSDLPP, LLEYLGVSNNQLEKLPELQNSS, FLKIIDVDNNSLKKLPDLPP, SLEFIAAGNNQLEELPELQNLP, FLTAIYADNNSLKKLPDLPL, SLESIVAGNNILEELPELQNLP, FLTTIYADNNLLKTLPDLPP, SLEALNVRDNYLTDLPELPQSL, TFLDVSENIFSGLSELPP, NLYYLNASSNEIRSLCDLPP, SLEELNVSNNKLIELPALPPRL, ERLIASFNHLAEVPELPQ, and NLKQLHVEYNPLREFPDIPESV. Ca(2+) contacts are provided by asparagine 246 and aspartate 266. Positions 307, 308, and 326 each coordinate Ca(2+).

Belongs to the LRR-containing bacterial E3 ligase family. Homotetramer forming a hollow cylinder with an inner diameter of approximately 35 angstroms.

The protein localises to the cell outer membrane. Its subcellular location is the secreted. Functionally, effector proteins function to alter host cell physiology and promote bacterial survival in host tissues. In Yersinia pestis, this protein is Outer membrane protein YopM (yopM).